The following is a 370-amino-acid chain: Neutral protease 2 homolog AFUB_070680 (370 aa).

Residues 1 to 19 (MKVTILASAILALINGALA) form the signal peptide. Positions 20-172 (LPANTPTLDV…PQAIKLLDRR (153 aa)) are excised as a propeptide. 2 cysteine pairs are disulfide-bonded: Cys178–Cys250 and Cys257–Cys275. His300 provides a ligand contact to Zn(2+). Residue Glu301 is part of the active site. Zn(2+) contacts are provided by His304 and Asp315.

This sequence belongs to the peptidase M35 family. Zn(2+) serves as cofactor.

The protein resides in the secreted. It carries out the reaction Preferential cleavage of bonds with hydrophobic residues in P1'. Also 3-Asn-|-Gln-4 and 8-Gly-|-Ser-9 bonds in insulin B chain.. Secreted metalloproteinase that allows assimilation of proteinaceous substrates. Shows high activities on basic nuclear substrates such as histone and protamine. May be involved in virulence. This is Neutral protease 2 homolog AFUB_070680 from Aspergillus fumigatus (strain CBS 144.89 / FGSC A1163 / CEA10) (Neosartorya fumigata).